Reading from the N-terminus, the 302-residue chain is ATP synthase gamma chain (302 aa).

It belongs to the ATPase gamma chain family. As to quaternary structure, F-type ATPases have 2 components, CF(1) - the catalytic core - and CF(0) - the membrane proton channel. CF(1) has five subunits: alpha(3), beta(3), gamma(1), delta(1), epsilon(1). CF(0) has three main subunits: a, b and c.

The protein localises to the cell membrane. Produces ATP from ADP in the presence of a proton gradient across the membrane. The gamma chain is believed to be important in regulating ATPase activity and the flow of protons through the CF(0) complex. The sequence is that of ATP synthase gamma chain from Kineococcus radiotolerans (strain ATCC BAA-149 / DSM 14245 / SRS30216).